The following is a 281-amino-acid chain: Insulin-like growth factor-binding protein 7 (281 aa).

Positions methionine 1–serine 25 are cleaved as a signal peptide. Residues serine 27–lysine 113 enclose the IGFBP N-terminal domain. 8 cysteine pairs are disulfide-bonded: cysteine 31-cysteine 56, cysteine 34-cysteine 58, cysteine 39-cysteine 59, cysteine 47-cysteine 62, cysteine 70-cysteine 86, cysteine 80-cysteine 110, cysteine 112-cysteine 130, and cysteine 119-cysteine 155. The region spanning glycine 98 to glutamine 157 is the Kazal-like domain. The region spanning proline 159–threonine 263 is the Ig-like C2-type domain. An N-linked (GlcNAc...) asparagine glycan is attached at asparagine 170. Cysteine 180 and cysteine 247 are disulfide-bonded. Serine 238 carries the phosphoserine modification.

As to quaternary structure, may interact with VPS24/CHMP3; the relevance of such interaction however remains unclear. Interacts with CD93; this interaction plays a role in endothelial cells angiogenesis. Post-translationally, N-glycosylated. Expressed at high levels in lung, kidney, small intestine, testis and uterus and at moderate levels in liver.

The protein resides in the secreted. Functionally, binds IGF1 and IGF2 with a relatively low affinity. Stimulates prostacyclin (PGI2) production. Stimulates cell adhesion. Acts as a ligand for CD93 to play a role in angiogenesis. The sequence is that of Insulin-like growth factor-binding protein 7 (Igfbp7) from Mus musculus (Mouse).